We begin with the raw amino-acid sequence, 198 residues long: Type 1 fimbriae regulatory protein FimE (198 aa).

One can recognise a Tyr recombinase domain in the interval Ser2–Glu184. Catalysis depends on residues Arg41, Lys66, His136, Arg139, and His162. Tyr171 functions as the O-(3'-phospho-DNA)-tyrosine intermediate in the catalytic mechanism.

Belongs to the 'phage' integrase family.

Its function is as follows. FimE is one of the 2 regulatory proteins which control the phase variation of type 1 fimbriae in E.coli. These proteins mediate the periodic inversion of a 300bp DNA segment that harbors the promoter for the fimbrial structural gene, fimA. FimE switches fimA off. The polypeptide is Type 1 fimbriae regulatory protein FimE (fimE) (Escherichia coli O6:H1 (strain CFT073 / ATCC 700928 / UPEC)).